A 460-amino-acid chain; its full sequence is 5-hydroxytryptamine receptor 2C (460 aa).

The signal sequence occupies residues 1-32 (MVNLGNAVRSLLMHLIGLLVWQFDISISPVAA). Residues 33 to 56 (IVTDTFNSSDGGRLFQFPDGVQNW) are Extracellular-facing. A helical transmembrane segment spans residues 57–81 (PALSIVVIIIMTIGGNILVIMAVSM). The Cytoplasmic portion of the chain corresponds to 82 to 87 (EKKLHN). Residues 88 to 112 (ATNYFLMSLAIADMLVGLLVMPLSL) form a helical membrane-spanning segment. Residues 113 to 129 (LAILYDYVWPLPRYLCP) lie on the Extracellular side of the membrane. Residues Cys-128 and Cys-208 are joined by a disulfide bond. Residues 130–152 (VWISLDVLFSTASIMHLCAISLD) form a helical membrane-spanning segment. Thr-140 contacts ergotamine. Residues 152–154 (DRY) carry the DRY motif; important for ligand-induced conformation changes motif. At 153 to 168 (RYVAIRNPIEHSRFNS) the chain is on the cytoplasmic side. Residues 169–190 (RTKAIMKIAIVWAISIGVSVPI) form a helical membrane-spanning segment. The Extracellular segment spans residues 191–214 (PVIGLRDESKVFVNNTTCVLNDPN). N-linked (GlcNAc...) asparagine glycosylation is found at Asn-204 and Asn-205. An ergotamine-binding site is contributed by Leu-210. The chain crosses the membrane as a helical span at residues 215-237 (FVLIGSFVAFFIPLTIMVITYFL). The Cytoplasmic portion of the chain corresponds to 238–313 (TIYVLRRQTL…AINNEKKASK (76 aa)). The tract at residues 276 to 301 (EEENAPNPNPDQKPRRKKKEKRPRGT) is disordered. The span at 289–299 (PRRKKKEKRPR) shows a compositional bias: basic residues. A helical membrane pass occupies residues 314-338 (VLGIVFFVFLIMWCPFFITNILSVL). Cys-339 and Cys-343 form a disulfide bridge. Residues 339 to 349 (CGKACNQKLME) lie on the Extracellular side of the membrane. Residues 350–372 (KLLNVFVWIGYVCSGINPLVYTL) traverse the membrane as a helical segment. Positions 366-370 (NPLVY) match the NPxxY motif; important for ligand-induced conformation changes and signaling motif. Residues 373–460 (FNKIYRRAFS…NVVSERISSV (88 aa)) lie on the Cytoplasmic side of the membrane. Residues 458–460 (SSV) carry the PDZ-binding motif.

This sequence belongs to the G-protein coupled receptor 1 family. In terms of assembly, interacts with MPDZ. Interacts with ARRB2. Interacts with MPP3; this interaction stabilizes the receptor at the plasma membrane and prevents the desensitization of the HTR2C receptor-mediated calcium response.

The protein localises to the cell membrane. G-protein coupled receptor for 5-hydroxytryptamine (serotonin). Also functions as a receptor for various drugs and psychoactive substances, including ergot alkaloid derivatives, 1-2,5,-dimethoxy-4-iodophenyl-2-aminopropane (DOI) and lysergic acid diethylamide (LSD). Ligand binding causes a conformation change that triggers signaling via guanine nucleotide-binding proteins (G proteins) and modulates the activity of downstream effectors. HTR2C is coupled to G(q)/G(11) G alpha proteins and activates phospholipase C-beta, releasing diacylglycerol (DAG) and inositol 1,4,5-trisphosphate (IP3) second messengers that modulate the activity of phosphatidylinositol 3-kinase and promote the release of Ca(2+) ions from intracellular stores, respectively. Beta-arrestin family members inhibit signaling via G proteins and mediate activation of alternative signaling pathways. Regulates neuronal activity via the activation of short transient receptor potential calcium channels in the brain, and thereby modulates the activation of pro-opiomelanocortin neurons and the release of CRH that then regulates the release of corticosterone. Plays a role in the regulation of appetite and eating behavior, responses to anxiogenic stimuli and stress. Plays a role in insulin sensitivity and glucose homeostasis. This is 5-hydroxytryptamine receptor 2C from Rattus norvegicus (Rat).